The primary structure comprises 498 residues: Aspartyl/glutamyl-tRNA(Asn/Gln) amidotransferase subunit B (498 aa).

Belongs to the GatB/GatE family. GatB subfamily. In terms of assembly, heterotrimer of A, B and C subunits.

It catalyses the reaction L-glutamyl-tRNA(Gln) + L-glutamine + ATP + H2O = L-glutaminyl-tRNA(Gln) + L-glutamate + ADP + phosphate + H(+). The catalysed reaction is L-aspartyl-tRNA(Asn) + L-glutamine + ATP + H2O = L-asparaginyl-tRNA(Asn) + L-glutamate + ADP + phosphate + 2 H(+). Functionally, allows the formation of correctly charged Asn-tRNA(Asn) or Gln-tRNA(Gln) through the transamidation of misacylated Asp-tRNA(Asn) or Glu-tRNA(Gln) in organisms which lack either or both of asparaginyl-tRNA or glutaminyl-tRNA synthetases. The reaction takes place in the presence of glutamine and ATP through an activated phospho-Asp-tRNA(Asn) or phospho-Glu-tRNA(Gln). The protein is Aspartyl/glutamyl-tRNA(Asn/Gln) amidotransferase subunit B of Caulobacter vibrioides (strain ATCC 19089 / CIP 103742 / CB 15) (Caulobacter crescentus).